Consider the following 334-residue polypeptide: MQRQIKLKNWLQTVYPERDFDLTFAAADADFRRYFRATFSDGSSVVCMDAPPDKMSVAPYLKVQKLFDMVNVPQVLHADTDLGFVVLNDLGNTTFLTAMLQEQGETAHKALLLEAIGELVELQKASREGVLPEYDRETMLREINLFPEWFVAKELGRELTFKQRQLWQQTVDTLLPPLLAQPKVYVHRDFIVRNLMLTRGRPGVLDFQDALYGPISYDLVSLLRDAFIEWEEEFVLDLVIRYWEKARAAGLPVPEAFDEFYRWFEWMGVQRHLKVAGIFARLYYRDGKDKYRPEIPRFLNYLRRVSRRYAELAPLYALLVELVGDEELETGFTF.

Belongs to the kinase AmgK family.

It carries out the reaction N-acetyl-D-muramate + ATP = N-acetyl-alpha-D-muramate 1-phosphate + ADP + H(+). The enzyme catalyses N-acetyl-D-glucosamine + ATP = N-acetyl-alpha-D-glucosamine 1-phosphate + ADP + H(+). It participates in cell wall biogenesis; peptidoglycan recycling. Functionally, sugar kinase that catalyzes the ATP-dependent phosphorylation of N-acetylmuramate (MurNAc) and N-acetylglucosamine (GlcNAc) at its C1 hydroxyl group, leading to MurNAc alpha-1P and GlcNAc alpha-1P, respectively. Is likely involved in peptidoglycan recycling as part of a cell wall recycling pathway that bypasses de novo biosynthesis of the peptidoglycan precursor UDP-MurNAc. Is able to complement the fosfomycin sensitivity phenotype of a P.putida mutant lacking amgK. In Neisseria meningitidis serogroup B (strain ATCC BAA-335 / MC58), this protein is N-acetylmuramate/N-acetylglucosamine kinase.